Consider the following 454-residue polypeptide: Guanine deaminase (454 aa).

H82 and H84 together coordinate Zn(2+). Residues 84-87, 213-214, 240-243, and D330 each bind substrate; these read HASQ, RF, and HISE. Residues H240 and D330 each contribute to the Zn(2+) site. Position 453 is a phosphoserine (S453).

It belongs to the metallo-dependent hydrolases superfamily. ATZ/TRZ family. Homodimer. Zn(2+) serves as cofactor.

The enzyme catalyses guanine + H2O + H(+) = xanthine + NH4(+). Its pathway is purine metabolism; guanine degradation; xanthine from guanine: step 1/1. Catalyzes the hydrolytic deamination of guanine, producing xanthine and ammonia. The polypeptide is Guanine deaminase (GDA) (Pongo abelii (Sumatran orangutan)).